We begin with the raw amino-acid sequence, 403 residues long: Phosphopentomutase (403 aa).

Asp-13, Asp-298, His-303, Asp-339, His-340, and His-351 together coordinate Mn(2+).

The protein belongs to the phosphopentomutase family. Mn(2+) serves as cofactor.

It localises to the cytoplasm. The enzyme catalyses 2-deoxy-alpha-D-ribose 1-phosphate = 2-deoxy-D-ribose 5-phosphate. It carries out the reaction alpha-D-ribose 1-phosphate = D-ribose 5-phosphate. It participates in carbohydrate degradation; 2-deoxy-D-ribose 1-phosphate degradation; D-glyceraldehyde 3-phosphate and acetaldehyde from 2-deoxy-alpha-D-ribose 1-phosphate: step 1/2. Its function is as follows. Isomerase that catalyzes the conversion of deoxy-ribose 1-phosphate (dRib-1-P) and ribose 1-phosphate (Rib-1-P) to deoxy-ribose 5-phosphate (dRib-5-P) and ribose 5-phosphate (Rib-5-P), respectively. In Streptococcus pyogenes serotype M4 (strain MGAS10750), this protein is Phosphopentomutase.